The primary structure comprises 728 residues: Glutamate--cysteine ligase (728 aa).

The segment at 517–552 (PVRTTRRGGSASRSASGTSTPNSGSSRPATPPLGPV) is disordered. Residues 523–536 (RGGSASRSASGTST) show a composition bias toward low complexity.

This sequence belongs to the glutamate--cysteine ligase type 3 family.

It carries out the reaction L-cysteine + L-glutamate + ATP = gamma-L-glutamyl-L-cysteine + ADP + phosphate + H(+). It functions in the pathway sulfur metabolism; glutathione biosynthesis; glutathione from L-cysteine and L-glutamate: step 1/2. This Neurospora crassa (strain ATCC 24698 / 74-OR23-1A / CBS 708.71 / DSM 1257 / FGSC 987) protein is Glutamate--cysteine ligase (gcs-1).